Consider the following 346-residue polypeptide: N-acetyl-gamma-glutamyl-phosphate reductase (346 aa).

Residue Cys149 is part of the active site.

Belongs to the NAGSA dehydrogenase family. Type 1 subfamily.

The protein localises to the cytoplasm. It carries out the reaction N-acetyl-L-glutamate 5-semialdehyde + phosphate + NADP(+) = N-acetyl-L-glutamyl 5-phosphate + NADPH + H(+). It functions in the pathway amino-acid biosynthesis; L-arginine biosynthesis; N(2)-acetyl-L-ornithine from L-glutamate: step 3/4. In terms of biological role, catalyzes the NADPH-dependent reduction of N-acetyl-5-glutamyl phosphate to yield N-acetyl-L-glutamate 5-semialdehyde. In Saccharophagus degradans (strain 2-40 / ATCC 43961 / DSM 17024), this protein is N-acetyl-gamma-glutamyl-phosphate reductase.